We begin with the raw amino-acid sequence, 367 residues long: Glycolate oxidase 1 (367 aa).

N-acetylmethionine is present on M1. Residue Y24 coordinates glyoxylate. Residues 77–79 (PTA), S106, 127–129 (QLY), and T155 each bind FMN. Y129 is a binding site for glyoxylate. Residue R164 participates in glyoxylate binding. The FMN site is built by K230 and S252. Glyoxylate-binding residues include H254 and R257. H254 (proton acceptor) is an active-site residue. Residues 285–289 (DGGVR) and 308–309 (GR) contribute to the FMN site.

Belongs to the FMN-dependent alpha-hydroxy acid dehydrogenase family. In terms of assembly, homotetramer. FMN serves as cofactor.

The protein resides in the peroxisome. The enzyme catalyses glycolate + O2 = glyoxylate + H2O2. The protein operates within photosynthesis; photorespiration; glycine from 2-phosphoglycolate: step 2/3. Functionally, catalyzes the oxidation of glycolate to glyoxylate, with a reduction of O2 to H2O2. Is a key enzyme in photorespiration in green plants. The chain is Glycolate oxidase 1 (GLO1) from Arabidopsis thaliana (Mouse-ear cress).